The chain runs to 396 residues: Putative N(4)-(beta-N-acetylglucosaminyl)-L-asparaginase GG24090 (396 aa).

Positions 1-23 are cleaved as a signal peptide; that stretch reads MKRHLGTCLWVLCLASTAFSSLA. 2 disulfide bridges follow: C100-C105 and C199-C215. T246 functions as the Nucleophile in the catalytic mechanism. Substrate contacts are provided by residues 274-277 and 297-300; these read RVGD and TGDG. Cysteines 357 and 384 form a disulfide.

Belongs to the Ntn-hydrolase family. Heterotetramer of two alpha and two beta chains arranged as a dimer of alpha/beta heterodimers. In terms of processing, cleaved into an alpha and beta chain by autocatalysis; this activates the enzyme. The N-terminal residue of the beta subunit is responsible for the nucleophile hydrolase activity.

The catalysed reaction is N(4)-(beta-N-acetyl-D-glucosaminyl)-L-asparagine + H2O = N-acetyl-beta-D-glucosaminylamine + L-aspartate + H(+). Cleaves the GlcNAc-Asn bond which joins oligosaccharides to the peptide of asparagine-linked glycoproteins. In Drosophila erecta (Fruit fly), this protein is Putative N(4)-(beta-N-acetylglucosaminyl)-L-asparaginase GG24090.